The sequence spans 693 residues: TGF-beta-activated kinase 1 and MAP3K7-binding protein 2 (693 aa).

The CUE domain occupies 8–51; sequence IDFQVLHDLRQKFPEVPEVVVSRCMLQNNNNLDACCAVLSQEST. The interval 91 to 130 is disordered; the sequence is GREGSRMNGSRTLTHSISDGQLQGGQSNSELFQQEPQTAP. Positions 97-130 are enriched in polar residues; it reads MNGSRTLTHSISDGQLQGGQSNSELFQQEPQTAP. An Asymmetric dimethylarginine modification is found at Arg-173. The segment at 219 to 310 is disordered; that stretch reads ITTPGGTTRQ…SGSSQSSAHS (92 aa). Residues 220-231 are compositionally biased toward low complexity; the sequence is TTPGGTTRQTQQ. A compositionally biased stretch (polar residues) spans 232 to 282; sequence HSGWVSQFNPMNPQQVYQPSQPGPWTTCPASNPLSHTSSQQPNQQGHQTSH. Over residues 286-310 the composition is skewed to low complexity; sequence PISSPTTSQPPTIHSSGSSQSSAHS. A Glycyl lysine isopeptide (Lys-Gly) (interchain with G-Cter in SUMO) cross-link involves residue Lys-329. The tract at residues 330–381 is disordered; the sequence is LEPPQRNNSSKLRSSGPRTSSTSSSVNSQTLNRNQPTVYIAASPPNTDELMS. Residues 343-359 show a composition bias toward low complexity; sequence SSGPRTSSTSSSVNSQT. Phosphoserine occurs at positions 372, 450, 482, and 524. Residues 532–619 are a coiled coil; the sequence is YTQALLVHQK…TKEIDLFQAR (88 aa). Residue Lys-562 forms a Glycyl lysine isopeptide (Lys-Gly) (interchain with G-Cter in SUMO) linkage. Ser-582 carries the phosphoserine modification. Residue Lys-611 forms a Glycyl lysine isopeptide (Lys-Gly) (interchain with G-Cter in ubiquitin) linkage. The interval 642-663 is disordered; sequence PPKPKDQRSIIKTPKTQDTEDD. A RanBP2-type zinc finger spans residues 663–693; that stretch reads DEGAQWNCTACTFLNHPALIRCEQCEMPRHF. A (Microbial infection) S-methylcysteine modification is found at Cys-673. The tract at residues 675-685 is interaction with polyubiquitin; the sequence is FLNHPALIRCE.

Interacts with MAP3K7 and TRAF6. Identified in the TRIKA2 complex composed of MAP3K7, TAB1 and TAB2. Binds 'Lys-63'-linked polyubiquitin chains. Interacts with NCOR1 and HDAC3 to form a ternary complex. Interacts (via C-terminal) with NUMBL (via PTB domain). Interacts (via the C-terminus) with DYNC2I2 (via WD domains). Interacts with RBCK1. Interacts with TRIM5. Interacts with TRIM38 (via B30.2/SPRY domain), leading to its translocation to lysosomes and degradation. Interacts with ASB1; this interaction promotes TAB2 stability. In terms of processing, degraded in a lysosome-dependent manner following interaction with TRIM38. SUMOylated by TRIM60; leading to inhibition of MAPK/NF-kappaB activation and the innate immune response. Post-translationally, ubiquitinated; following IL1 stimulation or TRAF6 overexpression. Ubiquitination involves RBCK1 leading to proteasomal degradation. Ubiquitinated at Lys-611 by TRIM45 leading to proteasomal degradation. In terms of processing, phosphorylated. (Microbial infection) Methylated at Cys-673 by enteropathogenic E.coli protein NleE or S.flexneri protein OspZ: methylation disrupts zinc-binding and ability to bind 'Lys-63'-linked ubiquitin, leading to NF-kappa-B inactivation. As to expression, widely expressed. In the embryo, expressed in the ventricular trabeculae, endothelial cells of the conotruncal cushions of the outflow tract and in the endothelial cells lining the developing aortic valves.

The protein resides in the membrane. The protein localises to the endosome membrane. It localises to the lysosome membrane. It is found in the cytoplasm. Its subcellular location is the cytosol. In terms of biological role, adapter required to activate the JNK and NF-kappa-B signaling pathways through the specific recognition of 'Lys-63'-linked polyubiquitin chains by its RanBP2-type zinc finger (NZF). Acts as an adapter linking MAP3K7/TAK1 and TRAF6 to 'Lys-63'-linked polyubiquitin chains. The RanBP2-type zinc finger (NZF) specifically recognizes Lys-63'-linked polyubiquitin chains unanchored or anchored to the substrate proteins such as RIPK1/RIP1 and RIPK2: this acts as a scaffold to organize a large signaling complex to promote autophosphorylation of MAP3K7/TAK1, and subsequent activation of I-kappa-B-kinase (IKK) core complex by MAP3K7/TAK1. Also recognizes and binds Lys-63'-linked polyubiquitin chains of heterotypic 'Lys-63'-/'Lys-48'-linked branched ubiquitin chains. Regulates the IL1-mediated translocation of NCOR1 out of the nucleus. Involved in heart development. The sequence is that of TGF-beta-activated kinase 1 and MAP3K7-binding protein 2 from Homo sapiens (Human).